A 394-amino-acid chain; its full sequence is MIKIKRKTAPPPVEQDSDSDSSFDEEEPQDLEVQEGPVTDSSDEEAASSSKKTAKQGEASEDLKEEDDDDDEEENDDDDEEEDDDDDDDKKTRIPVLNPLSWMRNKEQRLALYKKMKKEKHKKKMQERRARRKAGVPANPGHTIESLREKDQTEVANLNDSDNEELQKELQLDDFSSYFERSYEPKVLITFADNPVTKTRKFGLELSRIFPNALVKIRNKSSVKKICKSAEREEFTDVVIVNEDRRKPNGLLVIHLPNGPTAHFKLSNVKLTSDIKRDHKEITKHRPEVILNNFTTRLGLTVGRMLGALFHHDPEFRGRRAVTFHNQRDYIFFRHHRYEFTKEGKRVKLRELGPRFTLKLRSLQEGTFDSKTGDYAWIISNKRHAMESRRRFFL.

Disordered stretches follow at residues 1-98 (MIKI…PVLN) and 116-152 (MKKE…EKDQ). Acidic residues-rich tracts occupy residues 15 to 33 (QDSD…DLEV) and 59 to 88 (ASED…DDDD). The span at 116 to 134 (MKKEKHKKKMQERRARRKA) shows a compositional bias: basic residues. Residues 185–369 (PKVLITFADN…LRSLQEGTFD (185 aa)) form the Brix domain. An RNA-binding region spans residues 347–364 (VKLRELGPRFTLKLRSLQ).

It is found in the nucleus. Its subcellular location is the nucleolus. Functionally, may be required for ribosome biogenesis. The chain is Probable ribosome production factor 1 from Drosophila melanogaster (Fruit fly).